Here is a 542-residue protein sequence, read N- to C-terminus: Putative cysteine ligase BshC (542 aa).

Residues Val458–Glu487 adopt a coiled-coil conformation.

It belongs to the BshC family.

Functionally, involved in bacillithiol (BSH) biosynthesis. May catalyze the last step of the pathway, the addition of cysteine to glucosamine malate (GlcN-Mal) to generate BSH. The protein is Putative cysteine ligase BshC of Geobacillus thermodenitrificans (strain NG80-2).